Here is a 154-residue protein sequence, read N- to C-terminus: Prefoldin subunit 2 (154 aa).

Disordered regions lie at residues 1 to 20 (MADS…GKGA) and 126 to 154 (LMGE…VLVS). Residues 9 to 18 (GKSGGSGTGK) are compositionally biased toward gly residues. The segment covering 126-139 (LMGEDEKPAAKENS) has biased composition (basic and acidic residues). Residues 141–154 (GAGAKSSSAGVLVS) are compositionally biased toward low complexity.

It belongs to the prefoldin subunit beta family. In terms of assembly, heterohexamer of two PFD-alpha type and four PFD-beta type subunits. Component of the PAQosome complex which is responsible for the biogenesis of several protein complexes and which consists of R2TP complex members RUVBL1, RUVBL2, RPAP3 and PIH1D1, URI complex members PFDN2, PFDN6, PDRG1, UXT and URI1 as well as ASDURF, POLR2E and DNAAF10/WDR92. Interacts with URI1; the interaction is phosphorylation-dependent and occurs in a growth-dependent manner.

The protein localises to the nucleus. It localises to the cytoplasm. Its subcellular location is the mitochondrion. Functionally, binds specifically to cytosolic chaperonin (c-CPN) and transfers target proteins to it. Binds to nascent polypeptide chain and promotes folding in an environment in which there are many competing pathways for nonnative proteins. The polypeptide is Prefoldin subunit 2 (Pfdn2) (Rattus norvegicus (Rat)).